Reading from the N-terminus, the 470-residue chain is Serine hydroxymethyltransferase 5 (470 aa).

The residue at position 244 (lysine 244) is an N6-(pyridoxal phosphate)lysine.

It belongs to the SHMT family. Homotetramer. Pyridoxal 5'-phosphate is required as a cofactor.

It is found in the cytoplasm. The enzyme catalyses (6R)-5,10-methylene-5,6,7,8-tetrahydrofolate + glycine + H2O = (6S)-5,6,7,8-tetrahydrofolate + L-serine. The protein operates within one-carbon metabolism; tetrahydrofolate interconversion. Its function is as follows. Catalyzes the interconversion of serine and glycine. This chain is Serine hydroxymethyltransferase 5 (SHM5), found in Arabidopsis thaliana (Mouse-ear cress).